The following is a 441-amino-acid chain: Sec-independent protein translocase protein TatCo (441 aa).

The segment at 1–185 (MADEERDAGL…LVGEAPESDQ (185 aa)) is disordered. The span at 13-22 (ADDETDASDD) shows a compositional bias: acidic residues. Positions 51-62 (TPRDETVTHGSD) are enriched in basic and acidic residues. Over residues 75–104 (DNGDDSDSDTDAAPDDADDSATDSDADSDD) the composition is skewed to acidic residues. A compositionally biased stretch (basic and acidic residues) spans 105–117 (EPRLLADDEHTSH). Acidic residues-rich tracts occupy residues 122 to 138 (TYDDSSDESADDVDPDA) and 164 to 173 (EDADFDDEDV). The next 6 membrane-spanning stretches (helical) occupy residues 200–220 (LAVVLGVAGAITLVLFPGADI), 276–296 (VAGLAGTVIGLPVFVYETYLF), 317–337 (LVLALVGVLFAHFVVLPAIFA), 357–377 (FNLILILMGYMAVVFQIPLFV), 395–415 (RLLFWGAFLGLAFLVSPDPTG), and 416–436 (MAPIIIGATMITLFEGTLAAL).

It belongs to the TatC family. Forms a complex with TatA.

The protein resides in the cell membrane. Functionally, part of the twin-arginine translocation (Tat) system that transports large folded proteins containing a characteristic twin-arginine motif in their signal peptide across membranes. In Haloferax volcanii (strain ATCC 29605 / DSM 3757 / JCM 8879 / NBRC 14742 / NCIMB 2012 / VKM B-1768 / DS2) (Halobacterium volcanii), this protein is Sec-independent protein translocase protein TatCo.